We begin with the raw amino-acid sequence, 603 residues long: Replication protein E1 (603 aa).

The disordered stretch occupies residues 47 to 68 (DDNDLEQGNSRELFHQQESKES). Over residues 58 to 68 (ELFHQQESKES) the composition is skewed to basic and acidic residues. The Nuclear localization signal signature appears at 76 to 78 (KRK). S81 and S89 each carry phosphoserine; by host. A Nuclear export signal motif is present at residues 88 to 97 (LSPRLESITL). The segment at 143–306 (QLGTVDIHYK…TIVGHQSTEA (164 aa)) is DNA-binding region. The SF3 helicase domain occupies 405 to 555 (VNFIMFLAAL…FPMKADNTPE (151 aa)). 431–438 (GPPNTGKS) is an ATP binding site. K512 participates in a covalent cross-link: Glycyl lysine isopeptide (Lys-Gly) (interchain with G-Cter in SUMO). Residues 578-603 (DQEDEGENGESQRSFQCSARSANEHL) form a disordered region. Polar residues predominate over residues 586 to 603 (GESQRSFQCSARSANEHL).

It belongs to the papillomaviridae E1 protein family. As to quaternary structure, can form hexamers. Interacts with E2 protein; this interaction increases E1 DNA binding specificity. Interacts with host DNA polymerase subunit POLA2. Interacts with host single stranded DNA-binding protein RPA1. Interacts with host TOP1; this interaction stimulates the enzymatic activity of TOP1. Phosphorylated. In terms of processing, sumoylated.

It is found in the host nucleus. It catalyses the reaction Couples ATP hydrolysis with the unwinding of duplex DNA by translocating in the 3'-5' direction.. The catalysed reaction is ATP + H2O = ADP + phosphate + H(+). Its function is as follows. ATP-dependent DNA 3'-5' helicase required for initiation of viral DNA replication. It forms a complex with the viral E2 protein. The E1-E2 complex binds to the replication origin which contains binding sites for both proteins. During the initial step, a dimer of E1 interacts with a dimer of protein E2 leading to a complex that binds the viral origin of replication with high specificity. Then, a second dimer of E1 displaces the E2 dimer in an ATP-dependent manner to form the E1 tetramer. Following this, two E1 monomers are added to each half of the site, which results in the formation of two E1 trimers on the viral ori. Subsequently, two hexamers will be created. The double hexamer acts as a bi-directional helicase machinery and unwinds the viral DNA and then recruits the host DNA polymerase to start replication. This Human papillomavirus 21 protein is Replication protein E1.